Consider the following 321-residue polypeptide: Arabinan endo-1,5-alpha-L-arabinosidase A (321 aa).

Residues 1-19 form the signal peptide; it reads MYSLLTALSVPLLAGLAHG. Residue aspartate 34 is the Proton acceptor of the active site. The N-linked (GlcNAc...) asparagine glycan is linked to asparagine 192. Residue glutamate 200 is the Proton donor of the active site.

This sequence belongs to the glycosyl hydrolase 43 family.

It localises to the secreted. It catalyses the reaction Endohydrolysis of (1-&gt;5)-alpha-arabinofuranosidic linkages in (1-&gt;5)-arabinans.. It functions in the pathway glycan metabolism; L-arabinan degradation. In terms of biological role, endo-1,5-alpha-L-arabinanase involved in degradation of pectin. Its preferred substrate is linear 1,5-alpha-L-arabinan. The chain is Arabinan endo-1,5-alpha-L-arabinosidase A (abnA) from Aspergillus aculeatus.